Reading from the N-terminus, the 274-residue chain is Thymidylate synthase (274 aa).

Residue Arg21 participates in dUMP binding. A (6R)-5,10-methylene-5,6,7,8-tetrahydrofolate-binding site is contributed by His51. 123–124 provides a ligand contact to dUMP; that stretch reads RR. The Nucleophile role is filled by Cys156. DUMP contacts are provided by residues 176–179, Asn187, and 217–219; these read RSAD and HIY. Asp179 contacts (6R)-5,10-methylene-5,6,7,8-tetrahydrofolate. Residue Ser273 participates in (6R)-5,10-methylene-5,6,7,8-tetrahydrofolate binding.

The protein belongs to the thymidylate synthase family. Bacterial-type ThyA subfamily. In terms of assembly, homodimer.

It is found in the cytoplasm. It carries out the reaction dUMP + (6R)-5,10-methylene-5,6,7,8-tetrahydrofolate = 7,8-dihydrofolate + dTMP. It participates in pyrimidine metabolism; dTTP biosynthesis. In terms of biological role, catalyzes the reductive methylation of 2'-deoxyuridine-5'-monophosphate (dUMP) to 2'-deoxythymidine-5'-monophosphate (dTMP) while utilizing 5,10-methylenetetrahydrofolate (mTHF) as the methyl donor and reductant in the reaction, yielding dihydrofolate (DHF) as a by-product. This enzymatic reaction provides an intracellular de novo source of dTMP, an essential precursor for DNA biosynthesis. This chain is Thymidylate synthase, found in Francisella philomiragia subsp. philomiragia (strain ATCC 25017 / CCUG 19701 / FSC 153 / O#319-036).